The chain runs to 314 residues: GATA zinc finger domain-containing protein 19 (314 aa).

This chain is GATA zinc finger domain-containing protein 19 (gtaS), found in Dictyostelium discoideum (Social amoeba).